The sequence spans 447 residues: UDP-N-acetylmuramate--L-alanine ligase (447 aa).

Position 108–114 (Gly108–Ser114) interacts with ATP.

Belongs to the MurCDEF family.

The protein localises to the cytoplasm. The catalysed reaction is UDP-N-acetyl-alpha-D-muramate + L-alanine + ATP = UDP-N-acetyl-alpha-D-muramoyl-L-alanine + ADP + phosphate + H(+). The protein operates within cell wall biogenesis; peptidoglycan biosynthesis. In terms of biological role, cell wall formation. This is UDP-N-acetylmuramate--L-alanine ligase from Listeria monocytogenes serotype 4a (strain HCC23).